The following is a 20-amino-acid chain: Ribulose bisphosphate carboxylase small subunit (20 aa).

It belongs to the RuBisCO small chain family. In terms of assembly, heterohexadecamer of 8 large and 8 small subunits.

The protein resides in the plastid. The protein localises to the chloroplast. Functionally, ruBisCO catalyzes two reactions: the carboxylation of D-ribulose 1,5-bisphosphate, the primary event in carbon dioxide fixation, as well as the oxidative fragmentation of the pentose substrate in the photorespiration process. Both reactions occur simultaneously and in competition at the same active site. Although the small subunit is not catalytic it is essential for maximal activity. This Chattonella marina var. antiqua (Red tide flagellate) protein is Ribulose bisphosphate carboxylase small subunit.